A 963-amino-acid polypeptide reads, in one-letter code: Unconventional myosin-XIX (963 aa).

Residues 35 to 758 form the Myosin motor domain; that stretch reads HQLDDLTKVN…MLELLECGRA (724 aa). 132–139 lines the ATP pocket; sequence GESGAGKT. The segment at 602–624 is actin-binding; sequence LEQLLQVLHNTTPHYIRCIKPNS. 2 IQ domains span residues 762–782 and 783–812; these read EQCARCIQCGWRRHRLQKQEK and QRRAAVLIQAAFRSWLTRKHIRRLHIAATV. Positions 829–963 are myMOMA region; that stretch reads SKELDGMEEK…LLESHRPVQV (135 aa).

Belongs to the TRAFAC class myosin-kinesin ATPase superfamily. Myosin family. As to quaternary structure, myosin is a hexamer of 2 heavy chains and 4 light chains: interacts with myosin light chains MYL9 and MYL12B.

Its subcellular location is the mitochondrion outer membrane. The protein resides in the cytoplasm. It localises to the cytoskeleton. Its function is as follows. Actin-based motor molecule with ATPase activity that localizes to the mitochondrion outer membrane. Motor protein that moves towards the plus-end of actin filaments. Required for mitochondrial inheritance during mitosis. May be involved in mitochondrial transport or positioning. In Mus musculus (Mouse), this protein is Unconventional myosin-XIX.